Consider the following 161-residue polypeptide: Regulator of ribonuclease activity A (161 aa).

Belongs to the RraA family. As to quaternary structure, homotrimer. Binds to both RNA-binding sites in the C-terminal region of Rne and to RhlB.

Its subcellular location is the cytoplasm. Functionally, globally modulates RNA abundance by binding to RNase E (Rne) and regulating its endonucleolytic activity. Can modulate Rne action in a substrate-dependent manner by altering the composition of the degradosome. Modulates RNA-binding and helicase activities of the degradosome. The chain is Regulator of ribonuclease activity A from Yersinia pseudotuberculosis serotype O:1b (strain IP 31758).